We begin with the raw amino-acid sequence, 192 residues long: uncharacterized protein (192 aa).

The 132-residue stretch at Gln-29 to His-160 folds into the Nudix hydrolase domain. Positions Gly-67–Ala-89 match the Nudix box motif. Mg(2+) contacts are provided by Glu-83 and Glu-87.

The protein belongs to the Nudix hydrolase family. PCD1 subfamily. It depends on Mn(2+) as a cofactor. Mg(2+) serves as cofactor.

In terms of biological role, probably mediates the hydrolysis of some nucleoside diphosphate derivatives. This is an uncharacterized protein from Cronobacter sakazakii (strain ATCC BAA-894) (Enterobacter sakazakii).